A 649-amino-acid polypeptide reads, in one-letter code: Transcription factor E2-alpha (649 aa).

5 disordered regions span residues 34–107 (GKGR…SERS), 127–206 (LPGE…SAKT), 222–267 (LHPS…GLQQ), 291–325 (SAAP…SSSG), and 339–382 (DHSS…DGGL). Composition is skewed to polar residues over residues 56-76 (SSGS…SRTY) and 85-94 (SHNSLPSSTF). The span at 127 to 143 (LPGELGLSSPGPLSPSG) shows a compositional bias: low complexity. A phosphoserine mark is found at Ser-135 and Ser-140. Positions 145 to 156 (KSGSQYYPSYPS) are enriched in polar residues. Positions 171–177 (SKKVRKV) match the Nuclear localization signal motif. Composition is skewed to low complexity over residues 182–193 (PSSVYPSSSGDS) and 242–259 (GDGS…SVGS). Positions 339–352 (DHSSNNFSPSPSTP) are enriched in low complexity. Phosphothreonine is present on Thr-351. A Phosphoserine modification is found at Ser-355. Arg-367 is modified (omega-N-methylarginine). The residue at position 375 (Ser-375) is a Phosphoserine. The interval 385-420 (LSKMEDRLDEAIHVLRSHAVGTASDLHGLLPGHGAL) is leucine-zipper. The disordered stretch occupies residues 431 to 547 (GGRHAGLVGG…KAEREKERRV (117 aa)). A compositionally biased stretch (polar residues) spans 448-469 (TSGTSLLHTHASLPSQASSLPD). A Glycyl lysine isopeptide (Lys-Gly) (interchain with G-Cter in SUMO2) cross-link involves residue Lys-494. Position 524 is a phosphoserine (Ser-524). At Glu-529 the chain carries Phosphothreonine. Residues 537–547 (QKAEREKERRV) show a composition bias toward basic and acidic residues. The 54-residue stretch at 544–597 (ERRVANNARERLRVRDINEAFKELGRMCQLHLSSEKPQTKLLILHQAVAVILSL) folds into the bHLH domain. Lys-620 is covalently cross-linked (Glycyl lysine isopeptide (Lys-Gly) (interchain with G-Cter in SUMO2)).

In terms of assembly, homodimer. Heterodimer; efficient DNA binding requires dimerization with another bHLH protein. Forms a heterodimer with TWIST1 and TWIST2. Forms a heterodimer with NEUROD1; the heterodimer is inhibited in presence of ID2, but not NR0B2, to E-box element. Forms a heterodimer with TCF15; the heterodimer binds E-box element. Forms a heterodimer with MYOG; heterodimerization enhances MYOG DNA-binding and transcriptional activities. Forms a heterodimer with ATOH8; repress transcription of TCF3 and TCF3-NEUROG3 dimer-induced transactivation of E box-dependent promoters. Component of a nuclear TAL-1 complex composed at least of CBFA2T3, LDB1, TAL1 and TCF3. Interacts with NEUROD2. Interacts with EP300. Interacts with PTF1A, TGFB1I1 and UBE2I. Interacts with BHLHA9. Interacts with ASB2; the interaction is mediated by SKP2 and targets TCF3 for Notch-induced proteasomal degradation. Interacts with transcription factor ASCL5/AmeloD. Interacts with RALGAPA1. Interacts with FIGLA. As to quaternary structure, forms a heterodimer with ATOH7; required for ATOH7 DNA-binding. Phosphorylated following NGF stimulation. Post-translationally, undergoes Notch-induced ubiquitination and subsequent proteasomal degradation which is mediated by ASB1 or ASB2, the substrate-recognition components of probable ECS E3 ubiquitin-protein ligase complexes.

It localises to the nucleus. Transcriptional regulator. Involved in the initiation of neuronal differentiation and mesenchymal to epithelial transition. Heterodimers between TCF3 and tissue-specific basic helix-loop-helix (bHLH) proteins play major roles in determining tissue-specific cell fate during embryogenesis, like muscle or early B-cell differentiation. Together with TCF15, required for the mesenchymal to epithelial transition. Dimers bind DNA on E-box motifs: 5'-CANNTG-3'. Binds to the kappa-E2 site in the kappa immunoglobulin gene enhancer. Binds to IEB1 and IEB2, which are short DNA sequences in the insulin gene transcription control region. In terms of biological role, facilitates ATOH7 binding to DNA at the consensus sequence 5'-CAGGTG-3', and positively regulates transcriptional activity. The protein is Transcription factor E2-alpha (TCF3) of Mesocricetus auratus (Golden hamster).